Here is a 623-residue protein sequence, read N- to C-terminus: UvrABC system protein C (623 aa).

The GIY-YIG domain occupies 12–91 (FSPGVYLYKD…IKQYKPRFNI (80 aa)). Residues 201-236 (SDLARGLRARMEAASLEMRFEEAAGLRDLITTVEEI) enclose the UVR domain. Residues 604–623 (PVASVAQSEDAAPDVPDPQA) form a disordered region.

It belongs to the UvrC family. Interacts with UvrB in an incision complex.

It localises to the cytoplasm. Functionally, the UvrABC repair system catalyzes the recognition and processing of DNA lesions. UvrC both incises the 5' and 3' sides of the lesion. The N-terminal half is responsible for the 3' incision and the C-terminal half is responsible for the 5' incision. The chain is UvrABC system protein C from Solibacter usitatus (strain Ellin6076).